A 146-amino-acid chain; its full sequence is Snake venom vascular endothelial growth factor toxin (146 aa).

An N-terminal signal peptide occupies residues 1–24; the sequence is MAAYLLAVAILFCIQGWPLGTVQG. Q25 carries the pyrrolidone carboxylic acid modification. Intrachain disulfides connect C38–C80, C69–C115, and C73–C117. A disordered region spans residues 119-146; sequence PRSASGVNSRKHKRNPEEGEPRAKFPFV. Residues 133–146 are compositionally biased toward basic and acidic residues; sequence NPEEGEPRAKFPFV.

The protein belongs to the PDGF/VEGF growth factor family. Snake venom VEGF subfamily. In terms of assembly, homodimer; disulfide-linked. Interacts with VEGF receptor-1 (FLT1) with a high affinity, whereas it binds to VEGF receptor-2 (KDR) with a low affinity. Does not bind VEGF receptor-3 (FLT4). Expressed by the venom gland.

Its subcellular location is the secreted. In terms of biological role, snake venom VEGFs may contribute to venom dispersion and prey subjugation by inducing vascular permeability and hypotension. This protein induces vascular permeability probably through VEGF (VEGFR) signaling. This protein also induces a drastic hypotensive effect after intravenous injection. The hypotension is mediated by nitric oxide (NO), which is produced by VEGF-activated endothelium NO synthase. Also induces angiogenesis in vitro. Like other crotalid VEGFs, this protein interacts with VEGF receptor-1 (FLT1) with a high affinity, whereas it binds to VEGF receptor-2 (KDR) with a low affinity. The chain is Snake venom vascular endothelial growth factor toxin from Bothrops insularis (Golden lancehead).